The following is a 100-amino-acid chain: Ferredoxin (100 aa).

Residues 1-8 constitute a propeptide that is removed on maturation; that stretch reads MLSQVCRF. The 2Fe-2S ferredoxin-type domain occupies 9 to 100; that stretch reads GTITAVKGGV…GENDGAVFEL (92 aa). The [2Fe-2S] cluster site is built by Cys46, Cys52, Cys55, and Cys85.

Requires [2Fe-2S] cluster as cofactor.

It localises to the hydrogenosome. In terms of biological role, ferredoxins are iron-sulfur proteins that transfer electrons in a wide variety of metabolic reactions. It links pyruvate:ferredoxin oxidoreductase to hydrogenase. The protein is Ferredoxin of Trichomonas vaginalis.